We begin with the raw amino-acid sequence, 608 residues long: AAA ATPase forming ring-shaped complexes (608 aa).

Residues 45–79 (AQEYDAVLRRLSAAEATRDNMSRQIRGAGEKNRKL) are a coiled coil. 302–307 (GNGKTM) lines the ATP pocket.

It belongs to the AAA ATPase family. Homohexamer. Assembles into a hexameric ring structure.

This is AAA ATPase forming ring-shaped complexes from Rothia mucilaginosa (strain DY-18) (Stomatococcus mucilaginosus).